The primary structure comprises 1492 residues: Collagen alpha-1(II) chain (1492 aa).

A signal peptide spans 1-26; the sequence is MFSFVDSRTLVLFAATQVILLAVVRC. The propeptide at 27-186 is N-terminal propeptide; the sequence is QDEEDVLATG…PPGLGGNFAA (160 aa). Positions 36 to 94 constitute a VWFC domain; the sequence is GSCVQHGQRYSDKDVWKPEPCQICVCDTGNVLCDEIICEDPKDCPNAEIPFGECCPICP. Positions 98–1255 are disordered; the sequence is SSTSSGQGVL…ADQASSSVPQ (1158 aa). 2 stretches are compositionally biased toward basic and acidic residues: residues 110 to 121 and 138 to 159; these read QKGEPGDIKDVV and PRGD…RDGE. Residues 163–178 are compositionally biased toward pro residues; it reads PGNPGPVGPPGPPGPP. The segment covering 197–208 has biased composition (low complexity); it reads GGAQMGVMQGPM. Positions 206–1219 are triple-helical region; that stretch reads GPMGPMGPRG…PGPPGPPGPP (1014 aa). Positions 213 to 222 are enriched in pro residues; the sequence is PRGPPGPTGA. The segment covering 223–234 has biased composition (low complexity); sequence PGPQGFQGNPGE. Gly residues predominate over residues 236–245; it reads GEPGAGGPMG. Residues 256–270 are compositionally biased toward basic and acidic residues; the sequence is PGDDGEAGKPGKSGE. Gly residues predominate over residues 311–320; sequence GAKGEGGATG. Composition is skewed to low complexity over residues 321 to 333, 340 to 355, 366 to 376, and 396 to 436; these read EAGS…PRGL, PGAS…DGLP, PAGAPGFPGAP, and PRGE…AGAP. Residues 438–447 are compositionally biased toward pro residues; sequence FPGPRGPPGP. Composition is skewed to low complexity over residues 480 to 490 and 501 to 517; these read SAGPQGAPGPA and EPGA…RGAP. The span at 539–548 shows a compositional bias: gly residues; that stretch reads GVPGLGGPKG. 2 stretches are compositionally biased toward low complexity: residues 627-636 and 645-655; these read LLGAPGLRGL and AQGPNGPAGPA. Residues proline 664 and proline 673 each carry the 4-hydroxyproline modification. The residue at position 675 (proline 675) is a 3-hydroxyproline. Proline 676 and proline 679 each carry 4-hydroxyproline. Positions 711-741 are enriched in low complexity; the sequence is ERGSSGPQGLQGPRGLPGTPGTDGPKGATGP. Over residues 769-780 the composition is skewed to basic and acidic residues; sequence KGDRGDTGEKGP. Composition is skewed to low complexity over residues 838–850 and 894–910; these read AGFA…DGQA and AQGP…AGRV. Proline 912 is modified (3-hydroxyproline). 4-hydroxyproline occurs at positions 913, 919, and 925. Residues 919–930 are compositionally biased toward low complexity; it reads PGPSGAPGSAGK. A compositionally biased stretch (gly residues) spans 1010–1019; the sequence is GKQGGPGSAG. A compositionally biased stretch (low complexity) spans 1105–1114; sequence SGPAGARGLP. Over residues 1120-1134 the composition is skewed to basic and acidic residues; that stretch reads RGDKGEAGEAGERGQ. Composition is skewed to low complexity over residues 1140–1159 and 1176–1186; these read FTGL…QGAS and PSGKDGSNGLP. A 3-hydroxyproline modification is found at proline 1149. 4-hydroxyproline is present on proline 1186. Residue proline 1191 is modified to 3-hydroxyproline. Residue proline 1192 is modified to 4-hydroxyproline. Pro residues predominate over residues 1204–1221; that stretch reads AGPPGQPGPPGPPGPPGP. Residue proline 1206 is modified to 3-hydroxyproline. 4-hydroxyproline occurs at positions 1207 and 1210. Residue proline 1212 is modified to 3-hydroxyproline. 4-hydroxyproline is present on residues proline 1213 and proline 1216. Proline 1218 is subject to 3-hydroxyproline. Proline 1219 is subject to 4-hydroxyproline. The nonhelical region (C-terminal) stretch occupies residues 1220–1246; the sequence is GPGIDMSAFAGLSQPEKGPDPMRYMRA. Basic and acidic residues predominate over residues 1236–1245; sequence KGPDPMRYMR. Positions 1247 to 1492 are cleaved as a propeptide — C-terminal propeptide; sequence DQASSSVPQR…GVDIGPVCFL (246 aa). The Fibrillar collagen NC1 domain occupies 1258 to 1492; it reads VDVEATLKSL…GVDIGPVCFL (235 aa). Disulfide bonds link cysteine 1288/cysteine 1320, cysteine 1328/cysteine 1490, and cysteine 1398/cysteine 1443. Ca(2+)-binding residues include aspartate 1306, asparagine 1308, glutamine 1309, cysteine 1311, and aspartate 1314. N-linked (GlcNAc...) asparagine glycosylation is present at asparagine 1393.

This sequence belongs to the fibrillar collagen family. As to quaternary structure, homotrimers of alpha 1(II) chains. Contains mostly 4-hydroxyproline. Prolines at the third position of the tripeptide repeating unit (G-X-P) are 4-hydroxylated in some or all of the chains. Post-translationally, contains 3-hydroxyproline at a few sites. This modification occurs on the first proline residue in the sequence motif Gly-Pro-Hyp, where Hyp is 4-hydroxyproline. In terms of processing, lysine residues at the third position of the tripeptide repeating unit (G-X-Y) are 5-hydroxylated in some or all of the chains. O-glycosylated on hydroxylated lysine residues. The O-linked glycan consists of a Glc-Gal disaccharide.

It localises to the secreted. The protein localises to the extracellular space. Its subcellular location is the extracellular matrix. Its function is as follows. Type II collagen is specific for cartilaginous tissues. It is essential for the normal embryonic development of the skeleton, for linear growth and for the ability of cartilage to resist compressive forces. The protein is Collagen alpha-1(II) chain of Xenopus tropicalis (Western clawed frog).